The sequence spans 121 residues: Small ribosomal subunit protein bS6 (121 aa).

The protein belongs to the bacterial ribosomal protein bS6 family.

In terms of biological role, binds together with bS18 to 16S ribosomal RNA. The sequence is that of Small ribosomal subunit protein bS6 (rpsF) from Rickettsia prowazekii (strain Madrid E).